A 304-amino-acid chain; its full sequence is Nod factor export ATP-binding protein I (304 aa).

One can recognise an ABC transporter domain in the interval 6–236; that stretch reads IDFQQVEKRY…EIGCDVIEIY (231 aa). 38–45 contacts ATP; the sequence is GPNGAGKT.

This sequence belongs to the ABC transporter superfamily. Lipooligosaccharide exporter (TC 3.A.1.102) family. The complex is composed of two ATP-binding proteins (NodI) and two transmembrane proteins (NodJ).

It is found in the cell inner membrane. Its function is as follows. Part of the ABC transporter complex NodIJ involved in the export of the nodulation factors (Nod factors), the bacterial signal molecules that induce symbiosis and subsequent nodulation induction. Nod factors are LCO (lipo-chitin oligosaccharide), a modified beta-1,4-linked N-acetylglucosamine oligosaccharide. This subunit is responsible for energy coupling to the transport system. This chain is Nod factor export ATP-binding protein I, found in Burkholderia thailandensis (strain ATCC 700388 / DSM 13276 / CCUG 48851 / CIP 106301 / E264).